The sequence spans 487 residues: DNA ligase (487 aa).

K159 functions as the N6-AMP-lysine intermediate in the catalytic mechanism. 3 residues coordinate ATP: R164, R182, and E217. A divalent metal cation is bound at residue E217. Residues 229-237 (EGLDFLFDA) form an interaction with the sliding clamp region. Residue E344 coordinates a divalent metal cation. ATP-binding residues include R359 and K365.

This sequence belongs to the ATP-dependent DNA ligase family. As to quaternary structure, interacts with the sliding clamp. A divalent metal cation serves as cofactor.

The enzyme catalyses ATP + (deoxyribonucleotide)n-3'-hydroxyl + 5'-phospho-(deoxyribonucleotide)m = (deoxyribonucleotide)n+m + AMP + diphosphate.. Its function is as follows. DNA ligase, which is expressed in the early stage of lytic development, has been implicated in T4 DNA synthesis and genetic recombination. It may also play a role in T4 DNA repair. The polypeptide is DNA ligase (30) (Enterobacteria phage T4 (Bacteriophage T4)).